A 486-amino-acid chain; its full sequence is Probable peptidoglycan glycosyltransferase FtsW (486 aa).

Topologically, residues 1–50 (MAGAARDRAFLDHFGGAGADRPCHVEGALMNDMSRQATRLDAIGGRYDPW) are cytoplasmic. The helical transmembrane segment at 51–71 (LLGAAVTLASLGVVMVASSSI) threads the bilayer. Residues 72-77 (ELEASP) lie on the Periplasmic side of the membrane. A helical transmembrane segment spans residues 78 to 98 (FYYLTRHLLFLGGGIALAFWA). Over 99–112 (MRTELKTIEQHNQM) the chain is Cytoplasmic. The chain crosses the membrane as a helical span at residues 113-133 (LLLACFVLLVVVFVPGLGSTV). The Periplasmic portion of the chain corresponds to 134 to 141 (NGAKRWIN). The helical transmembrane segment at 142–162 (LGVSRFQVVESVKVFYIIWLA) threads the bilayer. At 163–174 (SYLVRFRDEVNA) the chain is on the cytoplasmic side. The chain crosses the membrane as a helical span at residues 175–195 (TWQAMLKPVFVVGLLVGLLLL). The Periplasmic segment spans residues 196–199 (QPDF). A helical membrane pass occupies residues 200-220 (GSSMLLLSVTACMLVLGGAPI). Residues 221 to 222 (GR) lie on the Cytoplasmic side of the membrane. Residues 223 to 243 (IILPILLLLPALVALVIFEPY) traverse the membrane as a helical segment. The Periplasmic segment spans residues 244 to 298 (RMRRVTSFMDPWVDQLGSGYQLSNALMAIGRGQWTGVGLGASVQKLNYLPESHTD). Residues 299–319 (FIFSVIAEELGFVGVCGVIGL) traverse the membrane as a helical segment. The Cytoplasmic segment spans residues 320–342 (YALLVGRAFWLGMRCVEMKRHFS). Residues 343–363 (GYIAFGIGLWIAMQSFVSIGV) form a helical membrane-spanning segment. Residues 364–374 (NLGILPTKGLT) are Periplasmic-facing. Residues 375–395 (LPLISSGGSSVLMTCLAMGVL) traverse the membrane as a helical segment. Residues 396–486 (LRVSYEADRA…RVEPTFGRIA (91 aa)) lie on the Cytoplasmic side of the membrane.

Belongs to the SEDS family. FtsW subfamily.

It localises to the cell inner membrane. The catalysed reaction is [GlcNAc-(1-&gt;4)-Mur2Ac(oyl-L-Ala-gamma-D-Glu-L-Lys-D-Ala-D-Ala)](n)-di-trans,octa-cis-undecaprenyl diphosphate + beta-D-GlcNAc-(1-&gt;4)-Mur2Ac(oyl-L-Ala-gamma-D-Glu-L-Lys-D-Ala-D-Ala)-di-trans,octa-cis-undecaprenyl diphosphate = [GlcNAc-(1-&gt;4)-Mur2Ac(oyl-L-Ala-gamma-D-Glu-L-Lys-D-Ala-D-Ala)](n+1)-di-trans,octa-cis-undecaprenyl diphosphate + di-trans,octa-cis-undecaprenyl diphosphate + H(+). The protein operates within cell wall biogenesis; peptidoglycan biosynthesis. In terms of biological role, peptidoglycan polymerase that is essential for cell division. The polypeptide is Probable peptidoglycan glycosyltransferase FtsW (Xanthomonas oryzae pv. oryzae (strain KACC10331 / KXO85)).